Consider the following 567-residue polypeptide: Adenine deaminase (567 aa).

Belongs to the metallo-dependent hydrolases superfamily. Adenine deaminase family. Mn(2+) is required as a cofactor.

It catalyses the reaction adenine + H2O + H(+) = hypoxanthine + NH4(+). This chain is Adenine deaminase, found in Methanothrix thermoacetophila (strain DSM 6194 / JCM 14653 / NBRC 101360 / PT) (Methanosaeta thermophila).